The primary structure comprises 68 residues: Cytotoxic linear peptide IsCT (68 aa).

Positions 1 to 23 (MKTQFAILLVALVLFQMFAQSDA) are cleaved as a signal peptide. Phe36 is modified (phenylalanine amide). A propeptide spanning residues 40–68 (GLSDLDGLDELFDGEISKADRDFLRELMR) is cleaved from the precursor.

It belongs to the non-disulfide-bridged peptide (NDBP) superfamily. Short antimicrobial peptide (group 4) family. In terms of processing, isCTf is an enzymatic proteolytic cleavage product of IsCT by the proteases present in the venom. As to expression, expressed by the venom gland.

Its subcellular location is the secreted. It localises to the target cell membrane. In terms of biological role, shows weak hemolytic activity and antibacterial activity against both Gram-positive and Gram-negative bacteria probably by forming pores in the cell membrane. IsCT adopts an amphipathic alpha-helical structure. Functionally, shows neither hemolytic, nor antibacterial activities, probably because it cannot adopt amphipathic alpha-helical structure. In Opisthacanthus madagascariensis (Scorpion), this protein is Cytotoxic linear peptide IsCT.